Here is a 240-residue protein sequence, read N- to C-terminus: Methylthioribulose-1-phosphate dehydratase (240 aa).

Residue Cys100 participates in substrate binding. 2 residues coordinate Zn(2+): His117 and His119. The Proton donor/acceptor role is filled by Glu146. His202 provides a ligand contact to Zn(2+).

This sequence belongs to the aldolase class II family. MtnB subfamily. Zn(2+) serves as cofactor.

Its subcellular location is the cytoplasm. It carries out the reaction 5-(methylsulfanyl)-D-ribulose 1-phosphate = 5-methylsulfanyl-2,3-dioxopentyl phosphate + H2O. It functions in the pathway amino-acid biosynthesis; L-methionine biosynthesis via salvage pathway; L-methionine from S-methyl-5-thio-alpha-D-ribose 1-phosphate: step 2/6. Catalyzes the dehydration of methylthioribulose-1-phosphate (MTRu-1-P) into 2,3-diketo-5-methylthiopentyl-1-phosphate (DK-MTP-1-P). In Emericella nidulans (strain FGSC A4 / ATCC 38163 / CBS 112.46 / NRRL 194 / M139) (Aspergillus nidulans), this protein is Methylthioribulose-1-phosphate dehydratase.